We begin with the raw amino-acid sequence, 338 residues long: Methionine import ATP-binding protein MetN 1 (338 aa).

The region spanning 2-241 is the ABC transporter domain; that stretch reads IQLENIEKHY…PNEKLTKDFI (240 aa). 38–45 contacts ATP; the sequence is GYSGAGKS.

Belongs to the ABC transporter superfamily. Methionine importer (TC 3.A.1.24) family. As to quaternary structure, the complex is composed of two ATP-binding proteins (MetN), two transmembrane proteins (MetI) and a solute-binding protein (MetQ).

The protein localises to the cell membrane. The catalysed reaction is L-methionine(out) + ATP + H2O = L-methionine(in) + ADP + phosphate + H(+). The enzyme catalyses D-methionine(out) + ATP + H2O = D-methionine(in) + ADP + phosphate + H(+). Functionally, part of the ABC transporter complex MetNIQ involved in methionine import. Responsible for energy coupling to the transport system. In Oceanobacillus iheyensis (strain DSM 14371 / CIP 107618 / JCM 11309 / KCTC 3954 / HTE831), this protein is Methionine import ATP-binding protein MetN 1.